We begin with the raw amino-acid sequence, 516 residues long: MHADLAATTSREDFRLLAAEHRVVPVTRKVLADSETPLSAYRKLAANRPGTFLLESAENGRSWSRWSFIGAGAPTALTVREGQAVWLGAVPKDAPTGGDPLRALQVTLELLATADRQSEPGLPPLSGGMVGFFAYDMVRRLERLPERAVDDLCLPDMLLLLATDVAAVDHHEGTITLIANAVNWNGTDERVDWAYDDAVARLDVMTAALGQPLPSTVATFSRPEPRHRAQRTVEEYGAIVEYLVDQIAAGEAFQVVPSQRFEMDTDVDPIDVYRILRVTNPSPYMYLLQVPNSDGAVDFSIVGSSPEALVTVHEGWATTHPIAGTRWRGRTDDEDVLLEKELLADDKERAEHLMLVDLGRNDLGRVCTPGTVRVEDYSHIERYSHVMHLVSTVTGKLGEGRTALDAVTACFPAGTLSGAPKVRAMELIEEVEKTRRGLYGGVVGYLDFAGNADFAIAIRTALMRNGTAYVQAGGGVVADSNGSYEYNEARNKARAVLNAIAAAETLAAPGANRSGC.

Residues S56 and 283-285 (PYM) each bind L-tryptophan. 324–325 (GT) is a chorismate binding site. E351 contributes to the Mg(2+) binding site. Chorismate-binding positions include Y439, R459, 473–475 (GGG), and G475. Residue E488 coordinates Mg(2+).

Belongs to the anthranilate synthase component I family. In terms of assembly, heterotetramer consisting of two non-identical subunits: a beta subunit (TrpG) and a large alpha subunit (TrpE). Mg(2+) is required as a cofactor.

The enzyme catalyses chorismate + L-glutamine = anthranilate + pyruvate + L-glutamate + H(+). The protein operates within amino-acid biosynthesis; L-tryptophan biosynthesis; L-tryptophan from chorismate: step 1/5. With respect to regulation, feedback inhibited by tryptophan. Part of a heterotetrameric complex that catalyzes the two-step biosynthesis of anthranilate, an intermediate in the biosynthesis of L-tryptophan. In the first step, the glutamine-binding beta subunit (TrpG) of anthranilate synthase (AS) provides the glutamine amidotransferase activity which generates ammonia as a substrate that, along with chorismate, is used in the second step, catalyzed by the large alpha subunit of AS (TrpE) to produce anthranilate. In the absence of TrpG, TrpE can synthesize anthranilate directly from chorismate and high concentrations of ammonia. The protein is Anthranilate synthase component 1 (trpE) of Mycobacterium bovis (strain ATCC BAA-935 / AF2122/97).